A 370-amino-acid chain; its full sequence is UDP-N-acetylglucosamine--N-acetylmuramyl-(pentapeptide) pyrophosphoryl-undecaprenol N-acetylglucosamine transferase (370 aa).

UDP-N-acetyl-alpha-D-glucosamine-binding positions include 10–12, N126, S200, I255, and Q300; that span reads TGG.

The protein belongs to the glycosyltransferase 28 family. MurG subfamily.

The protein resides in the cell membrane. The catalysed reaction is Mur2Ac(oyl-L-Ala-gamma-D-Glu-L-Lys-D-Ala-D-Ala)-di-trans,octa-cis-undecaprenyl diphosphate + UDP-N-acetyl-alpha-D-glucosamine = beta-D-GlcNAc-(1-&gt;4)-Mur2Ac(oyl-L-Ala-gamma-D-Glu-L-Lys-D-Ala-D-Ala)-di-trans,octa-cis-undecaprenyl diphosphate + UDP + H(+). The protein operates within cell wall biogenesis; peptidoglycan biosynthesis. Its function is as follows. Cell wall formation. Catalyzes the transfer of a GlcNAc subunit on undecaprenyl-pyrophosphoryl-MurNAc-pentapeptide (lipid intermediate I) to form undecaprenyl-pyrophosphoryl-MurNAc-(pentapeptide)GlcNAc (lipid intermediate II). In Lactobacillus delbrueckii subsp. bulgaricus (strain ATCC 11842 / DSM 20081 / BCRC 10696 / JCM 1002 / NBRC 13953 / NCIMB 11778 / NCTC 12712 / WDCM 00102 / Lb 14), this protein is UDP-N-acetylglucosamine--N-acetylmuramyl-(pentapeptide) pyrophosphoryl-undecaprenol N-acetylglucosamine transferase.